The primary structure comprises 327 residues: Aspartate--ammonia ligase (327 aa).

Belongs to the class-II aminoacyl-tRNA synthetase family. AsnA subfamily.

The protein resides in the cytoplasm. The enzyme catalyses L-aspartate + NH4(+) + ATP = L-asparagine + AMP + diphosphate + H(+). The protein operates within amino-acid biosynthesis; L-asparagine biosynthesis; L-asparagine from L-aspartate (ammonia route): step 1/1. This chain is Aspartate--ammonia ligase, found in Bacillus cytotoxicus (strain DSM 22905 / CIP 110041 / 391-98 / NVH 391-98).